The primary structure comprises 345 residues: Serine/threonine-protein kinase US3 homolog (345 aa).

The Protein kinase domain maps to 49-334 (FSVLETFTPG…KALLDFAAFY (286 aa)). ATP is bound by residues 55–63 (FTPGAEGFT) and Lys-78. Catalysis depends on Asp-162, which acts as the Proton acceptor.

It belongs to the protein kinase superfamily. Ser/Thr protein kinase family. Post-translationally, phosphorylated by UL13 homolog; this phosphorylation regulates subsequent phosphorylation of UL31 and UL34 homologs by US3. Autophosphorylated.

The protein resides in the host cytoplasm. The protein localises to the host nucleus. It carries out the reaction L-seryl-[protein] + ATP = O-phospho-L-seryl-[protein] + ADP + H(+). The enzyme catalyses L-threonyl-[protein] + ATP = O-phospho-L-threonyl-[protein] + ADP + H(+). In terms of biological role, multifunctional serine/threonine kinase that plays a role in several processes including egress of virus particles from the nucleus, modulation of the actin cytoskeleton and inhibition of apoptosis. Phosphorylates UL31 and UL34 homologs, two critical regulators of capsid budding from nucleus to endoplasmic reticulum, thereby facilitating virion egress. Modulates and redistributes host components of the nuclear envelope, including LMNA, emerin/EMD and the nuclear matrix protein MATR3. Phosphorylates envelope glycoprotein B (gB), probably to direct it to the cell surface. Promotes virus intracellular spread by restructuring host cell cytoskeleton. Blocks host apoptosis to extend cell survival and allow efficient viral replication. Promotes viral gene expression by phosphorylating host HDAC2 to reduce viral genome silencing. This Chlorocebus aethiops (Green monkey) protein is Serine/threonine-protein kinase US3 homolog (US2).